Consider the following 140-residue polypeptide: uncharacterized protein (140 aa).

This is an uncharacterized protein from Caenorhabditis elegans.